Reading from the N-terminus, the 208-residue chain is Protein-L-isoaspartate O-methyltransferase (208 aa).

Residue Ser-59 is part of the active site.

This sequence belongs to the methyltransferase superfamily. L-isoaspartyl/D-aspartyl protein methyltransferase family.

The protein resides in the cytoplasm. It carries out the reaction [protein]-L-isoaspartate + S-adenosyl-L-methionine = [protein]-L-isoaspartate alpha-methyl ester + S-adenosyl-L-homocysteine. Its function is as follows. Catalyzes the methyl esterification of L-isoaspartyl residues in peptides and proteins that result from spontaneous decomposition of normal L-aspartyl and L-asparaginyl residues. It plays a role in the repair and/or degradation of damaged proteins. This is Protein-L-isoaspartate O-methyltransferase from Escherichia fergusonii (strain ATCC 35469 / DSM 13698 / CCUG 18766 / IAM 14443 / JCM 21226 / LMG 7866 / NBRC 102419 / NCTC 12128 / CDC 0568-73).